Consider the following 260-residue polypeptide: Coiled-coil domain-containing protein 127 (260 aa).

Residues 47-135 (ESQKEIEKAR…QIIQEKSQRQ (89 aa)) are a coiled coil.

The sequence is that of Coiled-coil domain-containing protein 127 (Ccdc127) from Rattus norvegicus (Rat).